A 127-amino-acid chain; its full sequence is Two-component response regulator ORR41 (127 aa).

The 119-residue stretch at 7-125 (RVLLVEDEEI…KLGVILAKFR (119 aa)) folds into the Response regulatory domain. 4-aspartylphosphate is present on D60.

Belongs to the ARR family. Type-C subfamily. Two-component system major event consists of a His-to-Asp phosphorelay between a sensor histidine kinase (HK) and a response regulator (RR). In plants, the His-to-Asp phosphorelay involves an additional intermediate named Histidine-containing phosphotransfer protein (HPt). This multistep phosphorelay consists of a His-Asp-His-Asp sequential transfer of a phosphate group between first a His and an Asp of the HK protein, followed by the transfer to a conserved His of the HPt protein and finally the transfer to an Asp in the receiver domain of the RR protein.

In terms of biological role, functions as a response regulator involved in His-to-Asp phosphorelay signal transduction system. Phosphorylation of the Asp residue in the receiver domain activates the ability of the protein to promote the transcription of target genes. May directly activate some type-A response regulators in response to cytokinins. The chain is Two-component response regulator ORR41 from Oryza sativa subsp. japonica (Rice).